The chain runs to 466 residues: Glutamate--tRNA ligase (466 aa).

Residues 11–21 carry the 'HIGH' region motif; the sequence is PSPTGFIHLGN. A 'KMSKS' region motif is present at residues 243–247; sequence KMSKR. K246 is an ATP binding site.

It belongs to the class-I aminoacyl-tRNA synthetase family. Glutamate--tRNA ligase type 1 subfamily. As to quaternary structure, monomer.

The protein resides in the cytoplasm. It carries out the reaction tRNA(Glu) + L-glutamate + ATP = L-glutamyl-tRNA(Glu) + AMP + diphosphate. In terms of biological role, catalyzes the attachment of glutamate to tRNA(Glu) in a two-step reaction: glutamate is first activated by ATP to form Glu-AMP and then transferred to the acceptor end of tRNA(Glu). This chain is Glutamate--tRNA ligase, found in Cupriavidus taiwanensis (strain DSM 17343 / BCRC 17206 / CCUG 44338 / CIP 107171 / LMG 19424 / R1) (Ralstonia taiwanensis (strain LMG 19424)).